The primary structure comprises 1536 residues: Tyrosine-protein kinase BAZ1B (1536 aa).

Residues 25–130 (EVYTIEHTKE…GEKCDLMVGN (106 aa)) enclose the WAC domain. Disordered regions lie at residues 144–207 (LENP…TTMK), 304–470 (PSTK…GKPF), and 557–579 (LREKAKERREKEMQVRREMSRRY). 2 stretches are compositionally biased toward basic and acidic residues: residues 151 to 196 (NAEK…DRAR) and 334 to 343 (AKGDKKKNKD). Polar residues predominate over residues 344–355 (SQNIPLSPTIWS). Positions 392–401 (KQGDKKSSDP) are enriched in basic and acidic residues. Residues 443–452 (AKSPAAAGSP) are compositionally biased toward low complexity. A coiled-coil region spans residues 515-583 (EELKELVQKR…EMSRRYEDQE (69 aa)). In terms of domain architecture, DDT spans 603–667 (NTIFGDVAMV…LQTLLQDELA (65 aa)). 2 coiled-coil regions span residues 768–803 (HQKSAEMWKERVATLKEANDRKRAEKQKRKEQMETK) and 850–890 (IQAK…FQDA). The span at 785 to 832 (ANDRKRAEKQKRKEQMETKTDGDVLIKAEKKKESTVKKETPKVLPKEE) shows a compositional bias: basic and acidic residues. Positions 785-839 (ANDRKRAEKQKRKEQMETKTDGDVLIKAEKKKESTVKKETPKVLPKEEPEPEDMI) are disordered. The disordered stretch occupies residues 940 to 973 (PPEEEPVLTEEEEEEEEVKKEEETEDGEKEDEGS). Acidic residues-rich tracts occupy residues 941-955 (PEEEPVLTEEEEEEE) and 962-972 (ETEDGEKEDEG). A PHD-type zinc finger spans residues 1202–1252 (NARCKVCRRKGEDDKLILCDECNKAFHLFCLRPALYRIPAGEWLCPACQPT). Disordered regions lie at residues 1256–1371 (RSSR…KDVE) and 1477–1536 (LRRR…TKQK). Positions 1261-1293 (RNYKEDSEEEEDSEEEDEEESEEEDSEEEHRNT) form a coiled coil. Positions 1266-1287 (DSEEEEDSEEEDEEESEEEDSE) are enriched in acidic residues. A compositionally biased stretch (basic residues) spans 1297–1316 (LRSRKKVKTSSKSKMQKKPA). The span at 1325–1350 (KTDTNPSKTSPKSSAKPKSRAAPSSP) shows a compositional bias: low complexity. Ser1349 is subject to Phosphoserine. The 105-residue stretch at 1366-1470 (RKKDVELQKC…EAFVELLQKS (105 aa)) folds into the Bromo domain. Residues 1491-1502 (NSDDDDDDEEED) are compositionally biased toward acidic residues. Positions 1506–1524 (KKQKNGKQGKKASSKRKVE) are enriched in basic residues. Positions 1525–1536 (HSRTEKYQTKQK) are enriched in basic and acidic residues.

The protein belongs to the WAL family. BAZ1B subfamily. Interacts with smarca5/snf2h; the interaction is direct and forms the WICH complex. Component of the B-WICH complex. Requires Mn(2+) as cofactor.

It localises to the nucleus. It catalyses the reaction L-tyrosyl-[protein] + ATP = O-phospho-L-tyrosyl-[protein] + ADP + H(+). Atypical tyrosine-protein kinase that plays a central role in chromatin remodeling and acts as a transcription regulator. Involved in DNA damage response by phosphorylating 'Tyr-142' of histone H2AX (H2AXY142ph). H2AXY142ph plays a central role in DNA repair and acts as a mark that distinguishes between apoptotic and repair responses to genotoxic stress. Essential component of the WICH complex, a chromatin remodeling complex that mobilizes nucleosomes and reconfigures irregular chromatin to a regular nucleosomal array structure. The WICH complex regulates the transcription of various genes, has a role in RNA polymerase I and RNA polymerase III transcription, mediates the histone H2AX phosphorylation at 'Tyr-142', and is involved in the maintenance of chromatin structures during DNA replication processes. The sequence is that of Tyrosine-protein kinase BAZ1B (baz1b) from Danio rerio (Zebrafish).